The primary structure comprises 496 residues: Tripartite motif-containing protein 30A (496 aa).

The RING-type zinc finger occupies 15–59 (CPICLELLKEPVSADCNHSFCRACITLNYESNRNTDGKGNCPVCR). A B box-type zinc finger spans residues 91–132 (QKVNICAQHGEKLRLFCRKDMMVICWLCERSQEHRGHQTALI). The Zn(2+) site is built by cysteine 96, histidine 99, cysteine 118, and histidine 124. Residues 173-239 (NQIQINVENV…RDLISDVEHH (67 aa)) adopt a coiled-coil conformation. Residues 205–210 (KKEKKE) form a highly hydrophilic region. The Nuclear localization signal motif lies at 268–276 (TVPQKRKRT). Residues 281–496 (DLKGMLQVYQ…EPMTICGPPS (216 aa)) form the B30.2/SPRY domain.

In terms of assembly, homomultimer. Interacts with NR2C2/TAK1, TAB2 and TAB3. Does not interact with NLRP3, NLRC4 or TAB1. Highly expressed in spleen and lymph nodes (at protein level).

It localises to the cytoplasm. The protein resides in the nucleus. Trans-acting factor that regulates gene expression of interleukin 2 receptor alpha chain. May affect IL2R-alpha expression through cis-acting negative regulatory elements or through competition with proteins that bind to enhancer or activator sequences. Negatively regulates Toll-like receptor (TLR)-mediated activation of NFKB by promoting degradation of TAB2 and TAB3 and preventing TRAF6 autoubiquitination. Negatively regulates production of reactive oxygen species (ROS) which inhibits activation of the NLRP3 inflammasome complex. This, in turn, regulates activation of CASP1 and subsequent cleavage of IL1B and IL18. No activity detected against a range of retroviruses including a number of lentiviruses, gammaretroviruses and betaretroviruses. This chain is Tripartite motif-containing protein 30A (Trim30a), found in Mus musculus (Mouse).